Reading from the N-terminus, the 203-residue chain is Guanylate kinase (203 aa).

Residues 3-181 enclose the Guanylate kinase-like domain; the sequence is GTLYIVAAPS…AVSEMCAIFT (179 aa). ATP is bound at residue 10-17; that stretch reads APSGAGKS.

The protein belongs to the guanylate kinase family.

It localises to the cytoplasm. It carries out the reaction GMP + ATP = GDP + ADP. Its function is as follows. Essential for recycling GMP and indirectly, cGMP. This chain is Guanylate kinase, found in Xanthomonas oryzae pv. oryzae (strain MAFF 311018).